The chain runs to 210 residues: Protoporphyrinogen IX oxidase (210 aa).

A run of 5 helical transmembrane segments spans residues 22–42 (WFKA…FYLV), 74–94 (YNII…GLIF), 103–123 (GWLH…FYCG), 141–161 (FRAL…LAVF), and 165–185 (LPLD…AASI). Residue H27 coordinates heme. K108 is a heme binding site.

Belongs to the HemJ family. In terms of assembly, homodimer. Can also form higher oligomers, most probably tetramers. Interacts with Sll1106, however it is unlikely that Sll1106 is required for PPO function. The cofactor is heme b.

Its subcellular location is the cell membrane. The enzyme catalyses protoporphyrinogen IX + 3 A = protoporphyrin IX + 3 AH2. Its pathway is porphyrin-containing compound metabolism; protoporphyrin-IX biosynthesis; protoporphyrin-IX from protoporphyrinogen-IX: step 1/1. Functionally, catalyzes the oxidation of protoporphyrinogen IX to protoporphyrin IX. Is involved in the biosynthesis of tetrapyrrole molecules like heme and chlorophyll. Does not use oxygen or artificial electron acceptors such as menadione or benzoquinone. Is functionally coupled with coproporphyrinogen III oxidase (CPO). Is essential for growth. In Synechocystis sp. (strain ATCC 27184 / PCC 6803 / Kazusa), this protein is Protoporphyrinogen IX oxidase.